A 155-amino-acid polypeptide reads, in one-letter code: Regulatory protein RecX (155 aa).

It belongs to the RecX family.

It is found in the cytoplasm. Its function is as follows. Modulates RecA activity. In Pseudomonas fluorescens (strain ATCC BAA-477 / NRRL B-23932 / Pf-5), this protein is Regulatory protein RecX.